A 223-amino-acid chain; its full sequence is Endonuclease V (223 aa).

Aspartate 35 and aspartate 103 together coordinate Mg(2+).

Belongs to the endonuclease V family. Requires Mg(2+) as cofactor.

It localises to the cytoplasm. It catalyses the reaction Endonucleolytic cleavage at apurinic or apyrimidinic sites to products with a 5'-phosphate.. DNA repair enzyme involved in the repair of deaminated bases. Selectively cleaves double-stranded DNA at the second phosphodiester bond 3' to a deoxyinosine leaving behind the intact lesion on the nicked DNA. This is Endonuclease V from Salmonella agona (strain SL483).